Here is a 74-residue protein sequence, read N- to C-terminus: Large ribosomal subunit protein bL31 (74 aa).

The Zn(2+) site is built by Cys16, Cys18, Cys38, and Cys41.

This sequence belongs to the bacterial ribosomal protein bL31 family. Type A subfamily. As to quaternary structure, part of the 50S ribosomal subunit. Zn(2+) is required as a cofactor.

Its function is as follows. Binds the 23S rRNA. The protein is Large ribosomal subunit protein bL31 of Salinispora tropica (strain ATCC BAA-916 / DSM 44818 / JCM 13857 / NBRC 105044 / CNB-440).